We begin with the raw amino-acid sequence, 32 residues long: Acetolactate synthase, catabolic (32 aa).

It belongs to the TPP enzyme family. In terms of assembly, homodimer.

The catalysed reaction is 2 pyruvate + H(+) = (2S)-2-acetolactate + CO2. Its pathway is polyol metabolism; (R,R)-butane-2,3-diol biosynthesis; (R,R)-butane-2,3-diol from pyruvate: step 1/3. The protein is Acetolactate synthase, catabolic (budB) of Klebsiella aerogenes (Enterobacter aerogenes).